The following is a 137-amino-acid chain: Large ribosomal subunit protein uL16 (137 aa).

A compositionally biased stretch (basic residues) spans 1–17 (MLSPKRVKFRKRQRGRL). Residues 1 to 24 (MLSPKRVKFRKRQRGRLKGTDERG) form a disordered region.

Belongs to the universal ribosomal protein uL16 family. As to quaternary structure, part of the 50S ribosomal subunit.

Its function is as follows. Binds 23S rRNA and is also seen to make contacts with the A and possibly P site tRNAs. This chain is Large ribosomal subunit protein uL16, found in Leptospira borgpetersenii serovar Hardjo-bovis (strain JB197).